We begin with the raw amino-acid sequence, 2752 residues long: Protein PFF0380w (2752 aa).

Positions 20–30 (EREKEEEEKKR) are enriched in basic and acidic residues. Disordered regions lie at residues 20 to 44 (EREKEEEEKKRNYNISNNNNNNNYN), 139 to 160 (HIHKNNDINNIHEKNDKSNNDY), 634 to 678 (NDIV…INMK), 1048 to 1130 (DKKS…SGEN), and 1153 to 1172 (ENLQSDENHNNILYPYNNNG). The span at 32–44 (YNISNNNNNNNYN) shows a compositional bias: low complexity. Positions 142–157 (KNNDINNIHEKNDKSN) are enriched in basic and acidic residues. Residues 640–674 (NNNNNNNNNNNNNNNNNNNNNNNNNNNNNNNNNNN) are compositionally biased toward low complexity. A compositionally biased stretch (basic and acidic residues) spans 1048–1060 (DKKSEDMKEDTPT). A compositionally biased stretch (polar residues) spans 1061–1075 (RGENLQRGQNLQRGD). Over residues 1076–1090 (NLQRGDNLQRGDNLQ) the composition is skewed to basic and acidic residues. Residues 1091–1130 (RGDNLQNGDNLQNGDNLQRGDNLQNGENLQSGENLQSGEN) are compositionally biased toward polar residues. Over residues 1162–1172 (NNILYPYNNNG) the composition is skewed to low complexity. Positions 1277 to 1354 (TLEEVLEIIS…LHRTHIQHKK (78 aa)) constitute an HTH OST-type domain. 4 disordered regions span residues 1457-1499 (DIKQ…NNIS), 1958-1999 (AKNS…YYML), 2063-2099 (KRKNNNIHNYNDNNNDNNNDNNNDNNNDNNNDNNNDK), and 2501-2537 (DENNILNNNNDNNNNNNDKSNLVLHNNNDKSNHFLHN). Low complexity-rich tracts occupy residues 1469–1499 (NNINSNNSNNSNSNSNSNNNNNNNYNSNNIS) and 1962–1975 (NQENINQNEINYNN). The span at 1976–1994 (NDDDDDNNNNNNDDDDDDN) shows a compositional bias: acidic residues. Composition is skewed to low complexity over residues 2068–2095 (NIHNYNDNNNDNNNDNNNDNNNDNNNDN) and 2501–2526 (DENNILNNNNDNNNNNNDKSNLVLHN).

This Plasmodium falciparum (isolate 3D7) protein is Protein PFF0380w.